Consider the following 105-residue polypeptide: UPF0235 protein A1G_07140 (105 aa).

It belongs to the UPF0235 family.

The chain is UPF0235 protein A1G_07140 from Rickettsia rickettsii (strain Sheila Smith).